We begin with the raw amino-acid sequence, 116 residues long: Large ribosomal subunit protein bL19 (116 aa).

Belongs to the bacterial ribosomal protein bL19 family.

In terms of biological role, this protein is located at the 30S-50S ribosomal subunit interface and may play a role in the structure and function of the aminoacyl-tRNA binding site. In Streptomyces griseus subsp. griseus (strain JCM 4626 / CBS 651.72 / NBRC 13350 / KCC S-0626 / ISP 5235), this protein is Large ribosomal subunit protein bL19.